The sequence spans 176 residues: Large ribosomal subunit protein uL6 (176 aa).

The protein belongs to the universal ribosomal protein uL6 family. As to quaternary structure, part of the 50S ribosomal subunit.

Its function is as follows. This protein binds to the 23S rRNA, and is important in its secondary structure. It is located near the subunit interface in the base of the L7/L12 stalk, and near the tRNA binding site of the peptidyltransferase center. This is Large ribosomal subunit protein uL6 from Burkholderia ambifaria (strain MC40-6).